Here is a 264-residue protein sequence, read N- to C-terminus: Phosphatidylglycerol--prolipoprotein diacylglyceryl transferase (264 aa).

Helical transmembrane passes span 17 to 37, 57 to 77, 89 to 109, and 118 to 138; these read LAIH…YLLG, LIFY…VLFY, IAFL…VILV, and GVSF…GLGA. Residue R140 coordinates a 1,2-diacyl-sn-glycero-3-phospho-(1'-sn-glycerol). Transmembrane regions (helical) follow at residues 173–193, 201–221, and 237–257; these read PSQL…LWWF, GQVS…VEFT, and MGQW…VLTA.

It belongs to the Lgt family.

It localises to the cell inner membrane. The enzyme catalyses L-cysteinyl-[prolipoprotein] + a 1,2-diacyl-sn-glycero-3-phospho-(1'-sn-glycerol) = an S-1,2-diacyl-sn-glyceryl-L-cysteinyl-[prolipoprotein] + sn-glycerol 1-phosphate + H(+). Its pathway is protein modification; lipoprotein biosynthesis (diacylglyceryl transfer). Its function is as follows. Catalyzes the transfer of the diacylglyceryl group from phosphatidylglycerol to the sulfhydryl group of the N-terminal cysteine of a prolipoprotein, the first step in the formation of mature lipoproteins. The polypeptide is Phosphatidylglycerol--prolipoprotein diacylglyceryl transferase (Bordetella avium (strain 197N)).